Here is a 116-residue protein sequence, read N- to C-terminus: Large ribosomal subunit protein bL20 (116 aa).

Belongs to the bacterial ribosomal protein bL20 family.

In terms of biological role, binds directly to 23S ribosomal RNA and is necessary for the in vitro assembly process of the 50S ribosomal subunit. It is not involved in the protein synthesizing functions of that subunit. The polypeptide is Large ribosomal subunit protein bL20 (Helicobacter acinonychis (strain Sheeba)).